A 244-amino-acid chain; its full sequence is Probable H/ACA ribonucleoprotein complex subunit 1-like protein (244 aa).

2 disordered regions span residues 1 to 53 (MSFR…GGYD) and 145 to 244 (FLPQ…TKFE). RGG-box stretches follow at residues 4–51 (RGGR…GRGG) and 153–222 (RGRG…RGRG). Over residues 160–173 (RGGDRGGRGSDRGG) the composition is skewed to basic and acidic residues. 2 stretches are compositionally biased toward gly residues: residues 174-201 (RGGF…GGFR) and 208-217 (FRGGRGGDFG). A compositionally biased stretch (basic and acidic residues) spans 218 to 228 (GRGRGDFKRSY).

It belongs to the GAR1 family. As to quaternary structure, component of the small nucleolar ribonucleoprotein particle containing H/ACA-type snoRNAs (H/ACA snoRNPs).

It is found in the nucleus. Its subcellular location is the nucleolus. Required for ribosome biogenesis. Part of a complex which catalyzes pseudouridylation of rRNA. This involves the isomerization of uridine such that the ribose is subsequently attached to C5, instead of the normal N1. Pseudouridine ('psi') residues may serve to stabilize the conformation of rRNAs. Involved in phase separation into sub-nucleolar condensates. Essential for normal development and also plays a role in fertility. The sequence is that of Probable H/ACA ribonucleoprotein complex subunit 1-like protein from Caenorhabditis elegans.